A 124-amino-acid chain; its full sequence is Small ribosomal subunit protein uS12 (124 aa).

Disordered stretches follow at residues arginine 9–glycine 32 and glutamine 105–serine 124. Residues lysine 108–glycine 118 are compositionally biased toward basic residues.

The protein belongs to the universal ribosomal protein uS12 family. Part of the 30S ribosomal subunit. Contacts proteins S8 and S17. May interact with IF1 in the 30S initiation complex.

Functionally, with S4 and S5 plays an important role in translational accuracy. Interacts with and stabilizes bases of the 16S rRNA that are involved in tRNA selection in the A site and with the mRNA backbone. Located at the interface of the 30S and 50S subunits, it traverses the body of the 30S subunit contacting proteins on the other side and probably holding the rRNA structure together. The combined cluster of proteins S8, S12 and S17 appears to hold together the shoulder and platform of the 30S subunit. The protein is Small ribosomal subunit protein uS12 of Nocardia farcinica (strain IFM 10152).